The following is a 1259-amino-acid chain: MDEQSSGQDVDQSLDTLLKEIDLKMQLRDGEEGRRASAQSEGSLRLPAVRMLERGMVASASHKSVTFDEEPPSVHEYSVVMDSSAGTSECAEEEREGADGYECAADTMRVLYDEDTDSSCMGSERALAGPAAEGIVPEGYKEADLLGTERAGSGTPSLSYDDAAGLGSPPHVIFTIKPTSPLNAYDRGSWEPLQSNTAMDTPPRGGTAVSQHGLFAKAPKLPAIPSPNSRRRVSYAGSDSYPSDDSATDKRSLTDKTVPDNRGENERGGFGYENSDRNPSIETGTTDEYQSAGEYKSMSSSEANDDSKTEASVEDLRISNKPQRDTTIQDLHATTLPRSSSTLIPPALPPLDPSFFGRLARSPSYSPIRDRGSSEGSVGEHDSSLEQDHELGMGQQSARTNSSASGNSSDSVMVKPLSLFSNSQVDSLHLGAPAPDNSTPNKEALPSACPPDAMKSIGTQTSILEDKAESGPSQSSATSEKSVMLPNFPRFESFFDDSYPFGHDSDRSNNSVSYSKRTLKPSNYLSIWHLQEAQMRHDSPAFSANSQFSCKMVGESKRTSLESSRLSAKYESRFKFKFKPKLVSRRRIYYNKDQWRNFQEPPTRYYSNCTESDHISSDVPGTPVSPSIKSRNLCHGRTRGNMKMVERVNSLCSANERLSSAGNGDETFLSASSNLDVTSRRPSVDIISEISTKDLLPKIKQDSDGFNELIKTFVDHDEQSQQTDSTIASYRRGTRDTTIYHIWEHSIQENSISDYGNSPTAGKGTISKLLDNHEVEFDGKNSFVTGLGIIKKTDQDSRVDVLRIDSTQGIEAIQSFSPYSYRNAFDPVTPTKSAYHGCEALQASQMGTPFRPAISTTLQAQSGLGHKRPAVERPTTAQLGNYVSAEMSPEVQEPAEETKKRTDLQDNGQLYFVFVGIEQLALRDIERHSAECSIEFDNGNNVVQSEWLPLPKSGSMSLNQEYSVIIAEESLPNMIITLKCRYKSPKKELVEITEKVPLKSKCCGLGKPKYKQVKKLLRREMDFDEWDYKIAQDGSFARCKEQIDEELLKNVRYKKQQFRWTLLSEWERDHSKEHKRKRAWELPRLPAHPAGALVVDMCYLPRTSRFEKFPKTLQIARRVVNKFKEQKAIAMEGFMWQEGGDTEVLKRRYFTLNGTQLVAHHEITKKPKAMINLLRVEKLLTEAEISREMLSSSSRCFTDLVLLHECFVLFFENGEEIMFNPDTKTEKLEWIEKLRKVIELNRFHQPWVKKFLNSSENIL.

3 disordered regions span residues 185 to 416, 428 to 455, and 862 to 902; these read YDRG…MVKP, LHLGAPAPDNSTPNKEALPSACPPDAMK, and SGLG…KKRT. Over residues 247 to 267 the composition is skewed to basic and acidic residues; sequence ATDKRSLTDKTVPDNRGENER. Over residues 277-289 the composition is skewed to polar residues; it reads RNPSIETGTTDEY. 2 stretches are compositionally biased toward basic and acidic residues: residues 305-324 and 368-391; these read DDSKTEASVEDLRISNKPQR and IRDRGSSEGSVGEHDSSLEQDHEL. The span at 397-411 shows a compositional bias: low complexity; that stretch reads SARTNSSASGNSSDS. The PH domain maps to 1128–1239; sequence AIAMEGFMWQ…WIEKLRKVIE (112 aa).

The protein belongs to the BUD4 family.

The protein localises to the cell septum. May be involved in the septin organization at the site of septation. The polypeptide is Bud site selection protein 4 homolog (BUD4) (Eremothecium gossypii (strain ATCC 10895 / CBS 109.51 / FGSC 9923 / NRRL Y-1056) (Yeast)).